Reading from the N-terminus, the 489-residue chain is UDP-N-acetylmuramoyl-L-alanyl-D-glutamate--2,6-diaminopimelate ligase (489 aa).

A UDP-N-acetyl-alpha-D-muramoyl-L-alanyl-D-glutamate-binding site is contributed by S30. An ATP-binding site is contributed by 110–116 (GTNGKTT). UDP-N-acetyl-alpha-D-muramoyl-L-alanyl-D-glutamate contacts are provided by residues 152 to 153 (TT), S179, and R187. Residue K219 is modified to N6-carboxylysine. Residues R381, 405–408 (DNPR), G458, and E462 contribute to the meso-2,6-diaminopimelate site. Positions 405–408 (DNPR) match the Meso-diaminopimelate recognition motif motif.

This sequence belongs to the MurCDEF family. MurE subfamily. Mg(2+) serves as cofactor. In terms of processing, carboxylation is probably crucial for Mg(2+) binding and, consequently, for the gamma-phosphate positioning of ATP.

It is found in the cytoplasm. The catalysed reaction is UDP-N-acetyl-alpha-D-muramoyl-L-alanyl-D-glutamate + meso-2,6-diaminopimelate + ATP = UDP-N-acetyl-alpha-D-muramoyl-L-alanyl-gamma-D-glutamyl-meso-2,6-diaminopimelate + ADP + phosphate + H(+). It functions in the pathway cell wall biogenesis; peptidoglycan biosynthesis. Functionally, catalyzes the addition of meso-diaminopimelic acid to the nucleotide precursor UDP-N-acetylmuramoyl-L-alanyl-D-glutamate (UMAG) in the biosynthesis of bacterial cell-wall peptidoglycan. The sequence is that of UDP-N-acetylmuramoyl-L-alanyl-D-glutamate--2,6-diaminopimelate ligase from Syntrophomonas wolfei subsp. wolfei (strain DSM 2245B / Goettingen).